Here is a 720-residue protein sequence, read N- to C-terminus: Translation initiation factor IF-2 (720 aa).

The interval 48–138 (KKFKASQAKD…NEVEETKEMP (91 aa)) is disordered. 2 stretches are compositionally biased toward low complexity: residues 60-75 (KQNT…NKQN) and 99-113 (KGKQ…NKNQ). A compositionally biased stretch (basic residues) spans 114–123 (KNNKNKKNNK). Positions 222 to 391 (ERPAVVTIMG…GLVAEVQELK (170 aa)) constitute a tr-type G domain. Residues 231 to 238 (GHVDHGKT) are G1. Position 231 to 238 (231 to 238 (GHVDHGKT)) interacts with GTP. The tract at residues 256–260 (GITQH) is G2. Positions 277-280 (DTPG) are G3. GTP contacts are provided by residues 277–281 (DTPGH) and 331–334 (NKID). The G4 stretch occupies residues 331 to 334 (NKID). Residues 367–369 (SAL) are G5.

It belongs to the TRAFAC class translation factor GTPase superfamily. Classic translation factor GTPase family. IF-2 subfamily.

It localises to the cytoplasm. In terms of biological role, one of the essential components for the initiation of protein synthesis. Protects formylmethionyl-tRNA from spontaneous hydrolysis and promotes its binding to the 30S ribosomal subunits. Also involved in the hydrolysis of GTP during the formation of the 70S ribosomal complex. This chain is Translation initiation factor IF-2, found in Staphylococcus epidermidis (strain ATCC 35984 / DSM 28319 / BCRC 17069 / CCUG 31568 / BM 3577 / RP62A).